The following is a 201-amino-acid chain: Potassium-transporting ATPase KdpC subunit (201 aa).

The helical transmembrane segment at 13–33 (IIFIIFTILCGGIYTIFITGI) threads the bilayer.

This sequence belongs to the KdpC family. In terms of assembly, the system is composed of three essential subunits: KdpA, KdpB and KdpC.

It is found in the cell membrane. In terms of biological role, part of the high-affinity ATP-driven potassium transport (or Kdp) system, which catalyzes the hydrolysis of ATP coupled with the electrogenic transport of potassium into the cytoplasm. This subunit acts as a catalytic chaperone that increases the ATP-binding affinity of the ATP-hydrolyzing subunit KdpB by the formation of a transient KdpB/KdpC/ATP ternary complex. The polypeptide is Potassium-transporting ATPase KdpC subunit (Clostridium botulinum (strain Alaska E43 / Type E3)).